The primary structure comprises 377 residues: Chaperone protein DnaJ (377 aa).

The 66-residue stretch at 5 to 70 folds into the J domain; the sequence is DYYEILGVAK…QKRAAYDQFG (66 aa). The segment at 130–208 adopts a CR-type zinc-finger fold; sequence GTEVKIRVPS…CHGQGRVEEH (79 aa). 8 residues coordinate Zn(2+): Cys-143, Cys-146, Cys-160, Cys-163, Cys-182, Cys-185, Cys-196, and Cys-199. CXXCXGXG motif repeat units lie at residues 143 to 150, 160 to 167, 182 to 189, and 196 to 203; these read CGECHGSG, CGTCGGVG, CPRCHGTG, and CKACHGQG.

This sequence belongs to the DnaJ family. In terms of assembly, homodimer. Zn(2+) serves as cofactor.

The protein localises to the cytoplasm. Functionally, participates actively in the response to hyperosmotic and heat shock by preventing the aggregation of stress-denatured proteins and by disaggregating proteins, also in an autonomous, DnaK-independent fashion. Unfolded proteins bind initially to DnaJ; upon interaction with the DnaJ-bound protein, DnaK hydrolyzes its bound ATP, resulting in the formation of a stable complex. GrpE releases ADP from DnaK; ATP binding to DnaK triggers the release of the substrate protein, thus completing the reaction cycle. Several rounds of ATP-dependent interactions between DnaJ, DnaK and GrpE are required for fully efficient folding. Also involved, together with DnaK and GrpE, in the DNA replication of plasmids through activation of initiation proteins. The chain is Chaperone protein DnaJ from Thioalkalivibrio sulfidiphilus (strain HL-EbGR7).